The primary structure comprises 169 residues: uncharacterized protein (169 aa).

This is an uncharacterized protein from Mycoplasma pneumoniae (strain ATCC 29342 / M129 / Subtype 1) (Mycoplasmoides pneumoniae).